The sequence spans 250 residues: Bacteriorhodopsin (250 aa).

At 1–18 the chain is on the extracellular side; sequence MCCAALAPPMAATVGPES. The chain crosses the membrane as a helical span at residues 19 to 37; it reads IWLWIGTIGMTLGTLYFVG. Residues 38 to 51 lie on the Cytoplasmic side of the membrane; the sequence is RGRGVRDRKMQEFY. Residues 52–70 form a helical membrane-spanning segment; it reads IITIFITTIAAAMYFAMAT. At 71–86 the chain is on the extracellular side; that stretch reads GFGVTEVMVGDEALTI. Residues 87-104 traverse the membrane as a helical segment; sequence YWARYADWLFTTPLLLLD. Topologically, residues 105 to 115 are cytoplasmic; the sequence is LSLLAGANRNT. A helical membrane pass occupies residues 116 to 135; sequence IATLIGLDVFMIGTGAIAAL. Residues 136-142 lie on the Extracellular side of the membrane; the sequence is SSTPGTR. Residues 143 to 162 traverse the membrane as a helical segment; it reads IAWWAISTGALLALLYVLVG. Over 163-180 the chain is Cytoplasmic; that stretch reads TLSENARNRAPEVASLFG. Residues 181-199 traverse the membrane as a helical segment; it reads RLRNLVIALWFLYPVVWIL. Residues 200–212 lie on the Extracellular side of the membrane; that stretch reads GTEGTFGILPLYW. A helical transmembrane segment spans residues 213–232; sequence ETAAFMVLDLSAKVGFGVIL. Residue K225 is modified to N6-(retinylidene)lysine. The Cytoplasmic segment spans residues 233–250; it reads LQSRSVLERVATPTAAPT.

This sequence belongs to the archaeal/bacterial/fungal opsin family.

Its subcellular location is the cell membrane. Functionally, light-driven proton pump. This chain is Bacteriorhodopsin (bop), found in Haloterrigena sp. (strain arg-4).